The chain runs to 743 residues: Zinc transporter ZIP6 (743 aa).

Positions 1-20 (MARKLSVILILTFALSVTNP) are cleaved as a signal peptide. Residues 21–313 (LHELKAAAFP…PKTYSLQIAW (293 aa)) are Extracellular-facing. An N-linked (GlcNAc...) asparagine glycan is attached at N67. Residues 96–116 (HEHHSDHEHHSDHEHHSDHEH) show a composition bias toward basic and acidic residues. Disordered regions lie at residues 96 to 174 (HEHH…SASE) and 190 to 245 (LETI…SRNT). The span at 117–132 (HSHRNHAASGKNKRKA) shows a compositional bias: basic residues. 2 stretches are compositionally biased toward basic and acidic residues: residues 133–147 (LCPDHDSDSSGKDPR) and 155–167 (HRSEHASGRRNVK). The segment covering 206–215 (VSSSTPPSVT) has biased composition (polar residues). The span at 227–237 (KTNESVSEPRK) shows a compositional bias: basic and acidic residues. N-linked (GlcNAc...) asparagine glycans are attached at residues N229, N254, and N271. A helical membrane pass occupies residues 314 to 334 (VGGFIAISIISFLSLLGVILV). At 335 to 343 (PLMNRVFFK) the chain is on the cytoplasmic side. Residues 344–364 (FLLSFLVALAVGTLSGDAFLH) form a helical membrane-spanning segment. At 365–411 (LLPHSHASHHHSHSHEEPAMEMKRGPLFSHLSSQNIEESAYFDSTWK) the chain is on the extracellular side. A helical membrane pass occupies residues 412–432 (GLTALGGLYFMFLVEHVLTLI). Residues 433–645 (KQFKDKKKKN…LKAGMTVKQA (213 aa)) are Cytoplasmic-facing. Positions 452–474 (VEIKKQLSKYESQLSTNEEKVDT) form a coiled coil. S459 and S466 each carry phosphoserine. The chain crosses the membrane as a helical span at residues 646–666 (VLYNALSAMLAYLGMATGIFI). At 667 to 674 (GHYAENVS) the chain is on the extracellular side. N-linked (GlcNAc...) asparagine glycosylation is present at N672. The helical transmembrane segment at 675 to 695 (MWIFALTAGLFMYVALVDMVP) threads the bilayer. Residues 696–712 (EMLHNDASDHGCSRWGY) are Cytoplasmic-facing. Residues 713–733 (FFLQNAGMLLGFGIMLLISIF) form a helical membrane-spanning segment. Over 734-743 (EHKIVFRINF) the chain is Extracellular.

The protein belongs to the ZIP transporter (TC 2.A.5) family. As to quaternary structure, interacts with SLC39A10; which triggers cells to undergo EMT and mitosis. Found in a complex with SLC39A6, SLC39A10 and with the 'Ser-727' phosphorylated form of STAT3 throughout mitosis. Found in a complex with SLC39A6, SLC39A10 and with NCAM1; this complex controls NCAM1 phosphorylation and integration into focal adhesion complexes during epithelial-to-mesenchymal transition (EMT). Found in a complex with SLC39A6, SLC39A10 and with GSK3B that controls NCAM1 phosphorylation. Cleaved on the N-terminus before locating to the plasma membrane. In terms of processing, N-glycosylated. Post-translationally, phosphorylated by ZAP70 in response to TCR stimulation leading to its activation.

It localises to the cell membrane. The protein resides in the cell projection. The protein localises to the lamellipodium membrane. Its subcellular location is the membrane raft. It is found in the apical cell membrane. The catalysed reaction is Zn(2+)(in) = Zn(2+)(out). Functionally, zinc-influx transporter which plays a role in zinc homeostasis and in the induction of epithelial-to-mesenchymal transition (EMT). When associated with SLC39A10, the heterodimer formed by SLC39A10 and SLC39A6 mediates cellular zinc uptake to trigger cells to undergo epithelial- to-mesenchymal transition (EMT). The SLC39A10-SLC39A6 heterodimer also controls NCAM1 phosphorylation and its integration into focal adhesion complexes during EMT. Zinc influx inactivates GSK3B, enabling unphosphorylated SNAI1 in the nucleus to down-regulate adherence genes such as CDH1, causing loss of cell adherence. In addition, the SLC39A10-SLC39A6 heterodimer plays an essentiel role in initiating mitosis by importing zinc into cells to initiate a pathway resulting in the onset of mitosis. Participates in the T-cell receptor signaling regulation by mediating cellular zinc uptake into activated lymphocytes. Regulates the zinc influx necessary for proper meiotic progression to metaphase II (MII) that allows the oocyte-to-egg transition. This chain is Zinc transporter ZIP6, found in Pongo abelii (Sumatran orangutan).